Reading from the N-terminus, the 310-residue chain is Homoserine O-acetyltransferase (310 aa).

Cysteine 142 functions as the Acyl-thioester intermediate in the catalytic mechanism. Lysine 163 and serine 192 together coordinate substrate. Histidine 235 serves as the catalytic Proton acceptor. The active site involves glutamate 237. Arginine 249 provides a ligand contact to substrate.

This sequence belongs to the MetA family.

It localises to the cytoplasm. It catalyses the reaction L-homoserine + acetyl-CoA = O-acetyl-L-homoserine + CoA. Its pathway is amino-acid biosynthesis; L-methionine biosynthesis via de novo pathway; O-acetyl-L-homoserine from L-homoserine: step 1/1. In terms of biological role, transfers an acetyl group from acetyl-CoA to L-homoserine, forming acetyl-L-homoserine. In Agathobacter rectalis (strain ATCC 33656 / DSM 3377 / JCM 17463 / KCTC 5835 / VPI 0990) (Eubacterium rectale), this protein is Homoserine O-acetyltransferase.